An 87-amino-acid polypeptide reads, in one-letter code: Translation initiation factor IF-1 2 (87 aa).

One can recognise an S1-like domain in the interval 1 to 72 (MAKEELLELD…TKGRINFRHK (72 aa)).

It belongs to the IF-1 family. Component of the 30S ribosomal translation pre-initiation complex which assembles on the 30S ribosome in the order IF-2 and IF-3, IF-1 and N-formylmethionyl-tRNA(fMet); mRNA recruitment can occur at any time during PIC assembly.

Its subcellular location is the cytoplasm. Its function is as follows. One of the essential components for the initiation of protein synthesis. Stabilizes the binding of IF-2 and IF-3 on the 30S subunit to which N-formylmethionyl-tRNA(fMet) subsequently binds. Helps modulate mRNA selection, yielding the 30S pre-initiation complex (PIC). Upon addition of the 50S ribosomal subunit IF-1, IF-2 and IF-3 are released leaving the mature 70S translation initiation complex. The chain is Translation initiation factor IF-1 2 from Burkholderia vietnamiensis (strain G4 / LMG 22486) (Burkholderia cepacia (strain R1808)).